The following is a 426-amino-acid chain: Phosphomethylpyrimidine synthase (426 aa).

Substrate contacts are provided by residues Asn-65, Met-94, Tyr-123, His-162, 184-186 (SRG), 225-228 (DGMR), and Glu-264. His-268 serves as a coordination point for Zn(2+). Residue Tyr-291 participates in substrate binding. Residue His-332 participates in Zn(2+) binding. Positions 408, 411, and 415 each coordinate [4Fe-4S] cluster.

Belongs to the ThiC family. [4Fe-4S] cluster serves as cofactor.

The catalysed reaction is 5-amino-1-(5-phospho-beta-D-ribosyl)imidazole + S-adenosyl-L-methionine = 4-amino-2-methyl-5-(phosphooxymethyl)pyrimidine + CO + 5'-deoxyadenosine + formate + L-methionine + 3 H(+). It functions in the pathway cofactor biosynthesis; thiamine diphosphate biosynthesis. In terms of biological role, catalyzes the synthesis of the hydroxymethylpyrimidine phosphate (HMP-P) moiety of thiamine from aminoimidazole ribotide (AIR) in a radical S-adenosyl-L-methionine (SAM)-dependent reaction. The chain is Phosphomethylpyrimidine synthase from Methanococcus maripaludis (strain DSM 14266 / JCM 13030 / NBRC 101832 / S2 / LL).